We begin with the raw amino-acid sequence, 202 residues long: ATP-dependent Clp protease proteolytic subunit 1 (202 aa).

The Nucleophile role is filled by S102. Residue H127 is part of the active site.

Belongs to the peptidase S14 family. Fourteen ClpP subunits assemble into 2 heptameric rings which stack back to back to give a disk-like structure with a central cavity, resembling the structure of eukaryotic proteasomes.

It is found in the cytoplasm. It carries out the reaction Hydrolysis of proteins to small peptides in the presence of ATP and magnesium. alpha-casein is the usual test substrate. In the absence of ATP, only oligopeptides shorter than five residues are hydrolyzed (such as succinyl-Leu-Tyr-|-NHMec, and Leu-Tyr-Leu-|-Tyr-Trp, in which cleavage of the -Tyr-|-Leu- and -Tyr-|-Trp bonds also occurs).. Its function is as follows. Cleaves peptides in various proteins in a process that requires ATP hydrolysis. Has a chymotrypsin-like activity. Plays a major role in the degradation of misfolded proteins. This chain is ATP-dependent Clp protease proteolytic subunit 1, found in Agrobacterium fabrum (strain C58 / ATCC 33970) (Agrobacterium tumefaciens (strain C58)).